The primary structure comprises 193 residues: Anthranilate synthase component 2 (193 aa).

Positions 3-193 constitute a Glutamine amidotransferase type-1 domain; sequence DILLLDNVDS…EQTLAWALAK (191 aa). An L-glutamine-binding site is contributed by 57–59; that stretch reads GPG. Cys84 acts as the Nucleophile; for GATase activity in catalysis. L-glutamine-binding positions include Gln88 and 134 to 135; that span reads SL. Catalysis depends on for GATase activity residues His170 and Glu172.

Heterotetramer consisting of two non-identical subunits: a beta subunit (TrpG) and a large alpha subunit (TrpE).

The enzyme catalyses chorismate + L-glutamine = anthranilate + pyruvate + L-glutamate + H(+). It participates in amino-acid biosynthesis; L-tryptophan biosynthesis; L-tryptophan from chorismate: step 1/5. Its function is as follows. Part of a heterotetrameric complex that catalyzes the two-step biosynthesis of anthranilate, an intermediate in the biosynthesis of L-tryptophan. In the first step, the glutamine-binding beta subunit (TrpG) of anthranilate synthase (AS) provides the glutamine amidotransferase activity which generates ammonia as a substrate that, along with chorismate, is used in the second step, catalyzed by the large alpha subunit of AS (TrpE) to produce anthranilate. In the absence of TrpG, TrpE can synthesize anthranilate directly from chorismate and high concentrations of ammonia. The chain is Anthranilate synthase component 2 (trpG) from Serratia marcescens.